The primary structure comprises 110 residues: Small heat shock protein hspG11 (110 aa).

The 81-residue stretch at 30 to 110 folds into the sHSP domain; the sequence is KTIIDILPPM…KSTSTSSTFR (81 aa). The segment at 78-110 is disordered; that stretch reads KDLNKQHNNNNNNNNNNNNLVIEKSTSTSSTFR. Low complexity predominate over residues 85-96; it reads NNNNNNNNNNNN. Residues 101–110 show a composition bias toward polar residues; that stretch reads KSTSTSSTFR.

Belongs to the small heat shock protein (HSP20) family.

The polypeptide is Small heat shock protein hspG11 (hspG11) (Dictyostelium discoideum (Social amoeba)).